Here is a 427-residue protein sequence, read N- to C-terminus: ETS domain-containing protein Elk-1 (427 aa).

Residues 5–86 (VTLWQFLLQL…SGQKFVYKFV (82 aa)) constitute a DNA-binding region (ETS). 3 disordered regions span residues 116–146 (ATVH…GLAR), 166–202 (LQPQ…SPNP), and 226–252 (PNQK…VEGP). Residues K229, K248, and K253 each participate in a glycyl lysine isopeptide (Lys-Gly) (interchain with G-Cter in SUMO) cross-link. Polar residues predominate over residues 300–310 (STSTTEITQPQ). The disordered stretch occupies residues 300-350 (STSTTEITQPQKGRKPRDLELPLSPSLLGGQGPERTPGSGTSSGLQAQGPA). S323 carries the post-translational modification Phosphoserine; by MAPK1. Phosphothreonine; by MAPK1 is present on residues T335, T352, T362, and T367. Positions 348–398 (GPALTPSLLPTHTLTPVLLTPSSLPPSIHFWSTLSPIAPRSPAKLSFQFPS) are sufficient for interaction with MAD2L2. O-linked (GlcNAc) threonine glycosylation is present at T380. The residue at position 382 (S382) is a Phosphoserine; by MAPK1 and MAPK8. At S388 the chain carries Phosphoserine; by MAPK1. T416 is modified (phosphothreonine; by MAPK1). A Phosphoserine; by MAPK1 modification is found at S421.

This sequence belongs to the ETS family. As to quaternary structure, interacts in its sumoylated form with PIAS2/PIASX which enhances its transcriptional activator activity. Interacts with MAD2L2; the interaction is direct and promotes phosphorylation by the kinases MAPK8 and/or MAPK9. Interacts with POU1F1. In terms of processing, sumoylation represses transcriptional activator activity as it results in recruitment of HDAC2 to target gene promoters which leads to decreased histone acetylation and reduced transactivator activity. It also regulates nuclear retention. On mitogenic stimulation, phosphorylated on C-terminal serine and threonine residues by MAPK1. Ser-382 and Ser-388 are the preferred sites for MAPK1. In vitro, phosphorylation by MAPK1 potentiates ternary complex formation with the serum responses factors, SRE and SRF. Also phosphorylated on Ser-382 by MAPK8 and/or MAKP9. Phosphorylation leads to loss of sumoylation and restores transcriptional activator activity. Phosphorylated and activated by CAMK4, MAPK11, MAPK12 and MAPK14. Upon bFGF stimulus, phosphorylated by PAK1. Phosphorylated by PRP4K at Thr-416; phosphorylation activation ELK1 transcriptional activity.

The protein resides in the nucleus. Its function is as follows. Transcription factor that binds to purine-rich DNA sequences. Forms a ternary complex with SRF and the ETS and SRF motifs of the serum response element (SRE) on the promoter region of immediate early genes such as FOS and IER2. Induces target gene transcription upon JNK and MAPK-signaling pathways stimulation. This is ETS domain-containing protein Elk-1 from Rattus norvegicus (Rat).